A 212-amino-acid chain; its full sequence is External core antigen (212 aa).

A signal peptide spans 1–19 (MQLFHLCLIISCSCPTVQA). The tract at residues 25–27 (GWL) is HBEAG. Residues 172–212 (LPETTVVRRRGRSPRRRTPSPRRRRSKSPRRRRSQSRESQC) form a disordered region. A compositionally biased stretch (basic residues) spans 178–205 (VRRRGRSPRRRTPSPRRRRSKSPRRRRS). The 1; half-length repeat unit spans residues 184-189 (SPRRRT). Residues 184–205 (SPRRRTPSPRRRRSKSPRRRRS) form a 3 X 7 AA repeats of S-P-R-R-R-R-S region. Positions 184-212 (SPRRRTPSPRRRRSKSPRRRRSQSRESQC) are excised as a propeptide. Repeat copies occupy residues 191-197 (SPRRRRS) and 199-205 (SPRRRRS).

This sequence belongs to the orthohepadnavirus precore antigen family. Homodimerizes. Phosphorylated. Post-translationally, cleaved by host furin.

The protein resides in the secreted. It is found in the host nucleus. Functionally, may regulate immune response to the intracellular capsid in acting as a T-cell tolerogen, by having an immunoregulatory effect which prevents destruction of infected cells by cytotoxic T-cells. This immune regulation may predispose to chronicity during perinatal infections and prevent severe liver injury during adult infections. The sequence is that of External core antigen from Hepatitis B virus genotype C subtype adr (isolate Japan/Nishioka/1983) (HBV-C).